Reading from the N-terminus, the 238-residue chain is tRNA (guanine-N(7)-)-methyltransferase (238 aa).

Glu68, Glu93, Asp120, and Asp143 together coordinate S-adenosyl-L-methionine. Residue Asp143 is part of the active site. Substrate-binding positions include Lys147, Asp179, and 216 to 219 (TKFE).

Belongs to the class I-like SAM-binding methyltransferase superfamily. TrmB family.

It carries out the reaction guanosine(46) in tRNA + S-adenosyl-L-methionine = N(7)-methylguanosine(46) in tRNA + S-adenosyl-L-homocysteine. It participates in tRNA modification; N(7)-methylguanine-tRNA biosynthesis. Catalyzes the formation of N(7)-methylguanine at position 46 (m7G46) in tRNA. This chain is tRNA (guanine-N(7)-)-methyltransferase, found in Shewanella amazonensis (strain ATCC BAA-1098 / SB2B).